A 108-amino-acid chain; its full sequence is Circadian clock oscillator protein KaiB (108 aa).

It belongs to the KaiB family. May undergo a major conformational rearrangment; in the free state forms homooligomers. When bound to KaiC switches to a monomeric thioredoxin-fold (KaiB(fs)). The active oscillator complex is probably KaiC(6):KaiB(6).

Its function is as follows. Component of the KaiBC clock protein complex, which constitutes the main circadian regulator in cyanobacteria; it may modify the ATPase activity of KaiC. May be a metamorphic protein which reversibly switches between an inactive tetrameric fold and a rare, thioredoxin-like monomeric fold (KaiB(fs)). KaiB(fs) binds phospho-KaiC, and perhaps clock output effectors. This chain is Circadian clock oscillator protein KaiB, found in Prochlorococcus marinus (strain MIT 9515).